The chain runs to 154 residues: Probable cyclic pyranopterin monophosphate synthase (154 aa).

Substrate contacts are provided by residues 74 to 76 (LCH) and 110 to 111 (ME). The active site involves aspartate 125.

It belongs to the MoaC family. In terms of assembly, homohexamer; trimer of dimers.

The enzyme catalyses (8S)-3',8-cyclo-7,8-dihydroguanosine 5'-triphosphate = cyclic pyranopterin phosphate + diphosphate. The protein operates within cofactor biosynthesis; molybdopterin biosynthesis. Its function is as follows. Catalyzes the conversion of (8S)-3',8-cyclo-7,8-dihydroguanosine 5'-triphosphate to cyclic pyranopterin monophosphate (cPMP). In Methanosphaerula palustris (strain ATCC BAA-1556 / DSM 19958 / E1-9c), this protein is Probable cyclic pyranopterin monophosphate synthase.